Consider the following 362-residue polypeptide: Alpha-2-HS-glycoprotein (362 aa).

Residues 1–15 (LILFFCLAQLWGCRA) form the signal peptide. One can recognise a Cystatin fetuin-A-type 1 domain in the interval 24 to 130 (YREPACDDVE…QFSVLFAKCD (107 aa)). Disulfide bonds link Cys-29–Cys-353, Cys-86–Cys-97, Cys-111–Cys-129, Cys-143–Cys-146, Cys-205–Cys-216, and Cys-227–Cys-244. Asn-96 is a glycosylation site (N-linked (GlcNAc...) asparagine). A phosphoserine mark is found at Ser-131, Ser-132, and Ser-135. One can recognise a Cystatin fetuin-A-type 2 domain in the interval 141–252 (KVCPNCPLLA…TCTVFQTQPV (112 aa)). N-linked (GlcNAc...) asparagine glycans are attached at residues Asn-153 and Asn-173. 4 positions are modified to phosphoserine: Ser-314, Ser-318, Ser-321, and Ser-323. O-linked (GalNAc...) threonine glycosylation is present at Thr-332.

It belongs to the fetuin family. In terms of processing, phosphorylated by FAM20C in the extracellular medium. Expressed by the liver and secreted in plasma.

It is found in the secreted. This is Alpha-2-HS-glycoprotein (AHSG) from Sus scrofa (Pig).